A 158-amino-acid chain; its full sequence is UPF0145 protein Psyc_1853 (158 aa).

The segment covering 113–122 (IYQSSNQPPS) has biased composition (polar residues). Residues 113–158 (IYQSSNQPPSHHSGHSQYEEPVPSAAQPSTTAQANDDLPRFNPFGE) form a disordered region.

The protein belongs to the UPF0145 family.

In Psychrobacter arcticus (strain DSM 17307 / VKM B-2377 / 273-4), this protein is UPF0145 protein Psyc_1853.